Consider the following 372-residue polypeptide: 4-hydroxy-3-methylbut-2-en-1-yl diphosphate synthase (flavodoxin) (372 aa).

[4Fe-4S] cluster is bound by residues Cys270, Cys273, Cys305, and Glu312.

It belongs to the IspG family. Requires [4Fe-4S] cluster as cofactor.

The catalysed reaction is (2E)-4-hydroxy-3-methylbut-2-enyl diphosphate + oxidized [flavodoxin] + H2O + 2 H(+) = 2-C-methyl-D-erythritol 2,4-cyclic diphosphate + reduced [flavodoxin]. The protein operates within isoprenoid biosynthesis; isopentenyl diphosphate biosynthesis via DXP pathway; isopentenyl diphosphate from 1-deoxy-D-xylulose 5-phosphate: step 5/6. Functionally, converts 2C-methyl-D-erythritol 2,4-cyclodiphosphate (ME-2,4cPP) into 1-hydroxy-2-methyl-2-(E)-butenyl 4-diphosphate. This Escherichia coli O8 (strain IAI1) protein is 4-hydroxy-3-methylbut-2-en-1-yl diphosphate synthase (flavodoxin).